A 960-amino-acid polypeptide reads, in one-letter code: MGSAARNLCIKGAREHNLKNIDVMLPRDALVVISGLSGSGKSSLAFDTIFAEGQRRYVESLSAYARQFLGRLDKPDVDSIEGLSPAIAIEQKTTQRNPRSTVGTVTEIYDYYRLLFARIGRAHCPHCAREIKEQTVDQIVDTLMTVPSGSRIQLLAPVVRGKKGTHHKVLEAARKDGFVRARIDGALLHLHERISLDKQKKHSIDIVVDRIQLSDTVRKRLTESVETTLGYADGLLTVLVQGENSGTVSGKIETSALLPSELFFSQKNACAHCNVSVPELQPRLFSFNAPFGACPSCAGLGIMQTFDLDRIVPDQNRSFNEGAFLPFKPEHEWNRVRFAALAEKYHFSLDDPVRNLSKHALDIILHGSGSEALEFSHERKDGSRTARYIKPWPGIFSELHRRYAESCTHSQREVYERYLSVRTCEACRGMRLKPESLAVTIEKKNIHALSALSVDDSCEFFKTLHLTEVEATIAQQILKEITDRLEFLQNVGLGYLTLERAAATLSGGEAQRIRLATQIGSRLTGVLYILDEPSIGLHQRDNERLIQTLLHLRDLGNTVLVVEHDEQTLRVADYIVDLGPGAGVHGGYVVAAGSPPEVMQVQASLTGQYLAGAITLPIPAVRRTGNGNVLTVHDVHEHNLQHISVRIRLGTFTCITGVSGSGKSTLLIDVLYPALYNRVMNGRLPEGKFSSIEGTEHLDKVIYVDQSPIGRTPRSNPATYVGVFTDIRMLFSQVPEAKMRGYKPGRFSFNVPGGRCEHCKGDGVITIEMNFLPDVYITCDVCHGTRFNRETLAVFYKGKNISHVLDMTIEEARSFFSAVPPIVRKLEALCSVGLGYVRLGQSALTLSGGEAQRVKLALELSKRATGKTLYIFDEPTTGLHFADIIQLMEVVQRLVDQGNTVVMIEHNMDVIVQADCVIDLGPEGGMHGGTIVAQGSPEAVSQITESRTGWYIKEVLCKKT.

Residue 35 to 42 coordinates ATP; it reads GLSGSGKS. The C4-type zinc-finger motif lies at 270–297; sequence CAHCNVSVPELQPRLFSFNAPFGACPSC. ABC transporter domains are found at residues 327-605 and 625-953; these read FKPE…QASL and GNGN…WYIK. 657–664 is a binding site for ATP; it reads GVSGSGKS. Residues 756–782 form a C4-type zinc finger; sequence CEHCKGDGVITIEMNFLPDVYITCDVC.

It belongs to the ABC transporter superfamily. UvrA family. Forms a heterotetramer with UvrB during the search for lesions.

It is found in the cytoplasm. The UvrABC repair system catalyzes the recognition and processing of DNA lesions. UvrA is an ATPase and a DNA-binding protein. A damage recognition complex composed of 2 UvrA and 2 UvrB subunits scans DNA for abnormalities. When the presence of a lesion has been verified by UvrB, the UvrA molecules dissociate. In Treponema pallidum (strain Nichols), this protein is UvrABC system protein A.